The following is a 206-amino-acid chain: MAMVPADADAAAKPPPDVEKPDYSSQNGAPNSAAAAAGGGGGGVVDSVVARWRREDMLDKSPLALHAAAAAFAFVALVLVASNQHGDWMEFDRYQEYRYLLAIAALAFAYSLAQALRHALRMRRGVDPVPTASGRLLDFASDQVVAYLLMSALSAATPITNRMRSAVINRFTDTTAAAISMAFLAFVSLALSAIVSGYKLSKQTYM.

2 stretches are compositionally biased toward low complexity: residues 1 to 12 and 24 to 36; these read MAMVPADADAAA and SSQN…AAAA. Positions 1 to 42 are disordered; sequence MAMVPADADAAAKPPPDVEKPDYSSQNGAPNSAAAAAGGGGG. Over 1–60 the chain is Cytoplasmic; the sequence is MAMVPADADAAAKPPPDVEKPDYSSQNGAPNSAAAAAGGGGGGVVDSVVARWRREDMLDK. The chain crosses the membrane as a helical span at residues 61-81; sequence SPLALHAAAAAFAFVALVLVA. The Extracellular segment spans residues 82-99; the sequence is SNQHGDWMEFDRYQEYRY. Residues 100-120 traverse the membrane as a helical segment; the sequence is LLAIAALAFAYSLAQALRHAL. At 121-138 the chain is on the cytoplasmic side; the sequence is RMRRGVDPVPTASGRLLD. The helical transmembrane segment at 139–159 threads the bilayer; the sequence is FASDQVVAYLLMSALSAATPI. Topologically, residues 160-174 are extracellular; it reads TNRMRSAVINRFTDT. The chain crosses the membrane as a helical span at residues 175-195; that stretch reads TAAAISMAFLAFVSLALSAIV. At 196 to 206 the chain is on the cytoplasmic side; the sequence is SGYKLSKQTYM.

This sequence belongs to the Casparian strip membrane proteins (CASP) family. Homodimer and heterodimers.

It is found in the cell membrane. The polypeptide is CASP-like protein 4B2 (Oryza sativa subsp. japonica (Rice)).